The following is a 912-amino-acid chain: Accessory gland protein Acp36DE (912 aa).

An N-terminal signal peptide occupies residues Met1 to Ser23. Composition is skewed to low complexity over residues Gln193–Ser220, Ser230–Gln255, Lys271–Gln324, and Gln521–Gln544. Disordered stretches follow at residues Gln193–Gln255, Lys271–Leu349, Thr518–Gln544, Pro638–Gly671, and Gly732–Gly912. Low complexity-rich tracts occupy residues Gly732–Gln757 and Gln765–Thr785. Positions Arg803 to Gln818 are enriched in basic and acidic residues. The span at Ser821–Ser845 shows a compositional bias: low complexity. Residues Glu851–Asp861 are compositionally biased toward polar residues. A compositionally biased stretch (low complexity) spans Gln862–Ser897. Positions Lys898–Gly912 are enriched in polar residues.

Proteolytically cleaved by the seminal metalloprotease Semp1. Cleavage appears to take place in the mated female. As to expression, detected in the male accessory glands (at protein level). Produced in the accessory glands and secreted into seminal fluid.

The protein resides in the secreted. Functionally, responsible for physiological and behavioral changes in mated female flies. Associates with sperm and localizes to specific regions of the female reproductive tract, including the sperm storage organs. It accelerates sperm accumulation into storage but does not mediate the entry of the first sperm into storage. Once sperm storage has initiated it seems to act as a guidance factor helping subsequent sperm move into storage, a corral concentrating sperm around the SSO entrances and/or a trigger for responses within the female that accelerate storage of sperm. The protein is Accessory gland protein Acp36DE (Acp36DE) of Drosophila melanogaster (Fruit fly).